The sequence spans 460 residues: Dynactin subunit 4 (460 aa).

The residue at position 2 (Ala-2) is an N-acetylalanine. Residues 152-172 are a coiled coil; the sequence is QQLAQKEKVERDRKKLARRRN. A Phosphoserine modification is found at Ser-196. A Glycyl lysine isopeptide (Lys-Gly) (interchain with G-Cter in SUMO2) cross-link involves residue Lys-215. Thr-407 is subject to Phosphothreonine.

It belongs to the dynactin subunit 4 family. As to quaternary structure, subunit of dynactin, a multiprotein complex part of a tripartite complex with dynein and a adapter, such as BICDL1, BICD2 or HOOK3. The dynactin complex is built around ACTR1A/ACTB filament and consists of an actin-related filament composed of a shoulder domain, a pointed end and a barbed end. Its length is defined by its flexible shoulder domain. The soulder is composed of 2 DCTN1 subunits, 4 DCTN2 and 2 DCTN3. The 4 DCNT2 (via N-terminus) bind the ACTR1A filament and act as molecular rulers to determine the length. The pointed end is important for binding dynein-dynactin cargo adapters. Consists of 4 subunits: ACTR10, DCNT4, DCTN5 and DCTN6. The barbed end is composed of a CAPZA1:CAPZB heterodimers, which binds ACTR1A/ACTB filament and dynactin and stabilizes dynactin. Interacts with ATP7B, but not ATP7A, in a copper-dependent manner. Interacts with ANK2; this interaction is required for localization at costameres. Interacts with N4BP2L1.

It localises to the cytoplasm. The protein localises to the cytoskeleton. The protein resides in the microtubule organizing center. Its subcellular location is the centrosome. It is found in the stress fiber. It localises to the cell cortex. The protein localises to the myofibril. The protein resides in the sarcomere. In terms of biological role, part of the dynactin complex that activates the molecular motor dynein for ultra-processive transport along microtubules. This Homo sapiens (Human) protein is Dynactin subunit 4.